The primary structure comprises 239 residues: Aspartate/glutamate leucyltransferase (239 aa).

The protein belongs to the R-transferase family. Bpt subfamily.

The protein resides in the cytoplasm. The catalysed reaction is N-terminal L-glutamyl-[protein] + L-leucyl-tRNA(Leu) = N-terminal L-leucyl-L-glutamyl-[protein] + tRNA(Leu) + H(+). It carries out the reaction N-terminal L-aspartyl-[protein] + L-leucyl-tRNA(Leu) = N-terminal L-leucyl-L-aspartyl-[protein] + tRNA(Leu) + H(+). Its function is as follows. Functions in the N-end rule pathway of protein degradation where it conjugates Leu from its aminoacyl-tRNA to the N-termini of proteins containing an N-terminal aspartate or glutamate. In Campylobacter jejuni subsp. jejuni serotype O:2 (strain ATCC 700819 / NCTC 11168), this protein is Aspartate/glutamate leucyltransferase.